The primary structure comprises 447 residues: Na(+)/H(+) antiporter NhaA 2 (447 aa).

A run of 10 helical transmembrane segments spans residues 34-54, 77-97, 115-135, 146-166, 176-196, 200-220, 290-310, 321-341, 359-379, and 393-413; these read VGGV…NSPW, LTLG…VVGL, ALPI…FVLV, GWAI…AVIG, FLLT…AVFY, INGL…LCVQ, VSAG…SIGG, PITL…IVLT, WVDV…SLLI, and FVKI…AVVL.

Belongs to the NhaA Na(+)/H(+) (TC 2.A.33) antiporter family.

It localises to the cell membrane. It catalyses the reaction Na(+)(in) + 2 H(+)(out) = Na(+)(out) + 2 H(+)(in). Its function is as follows. Na(+)/H(+) antiporter that extrudes sodium in exchange for external protons. The protein is Na(+)/H(+) antiporter NhaA 2 of Mycolicibacterium gilvum (strain PYR-GCK) (Mycobacterium gilvum (strain PYR-GCK)).